Here is a 90-residue protein sequence, read N- to C-terminus: UPF0297 protein LVIS_1222 (90 aa).

It belongs to the UPF0297 family.

This Levilactobacillus brevis (strain ATCC 367 / BCRC 12310 / CIP 105137 / JCM 1170 / LMG 11437 / NCIMB 947 / NCTC 947) (Lactobacillus brevis) protein is UPF0297 protein LVIS_1222.